The primary structure comprises 366 residues: Chorismate synthase (366 aa).

2 residues coordinate NADP(+): arginine 48 and arginine 54. FMN is bound by residues 125–127, 238–239, glycine 278, 293–297, and arginine 319; these read RSS, NA, and KPTSS.

This sequence belongs to the chorismate synthase family. Homotetramer. FMNH2 is required as a cofactor.

It carries out the reaction 5-O-(1-carboxyvinyl)-3-phosphoshikimate = chorismate + phosphate. The protein operates within metabolic intermediate biosynthesis; chorismate biosynthesis; chorismate from D-erythrose 4-phosphate and phosphoenolpyruvate: step 7/7. Functionally, catalyzes the anti-1,4-elimination of the C-3 phosphate and the C-6 proR hydrogen from 5-enolpyruvylshikimate-3-phosphate (EPSP) to yield chorismate, which is the branch point compound that serves as the starting substrate for the three terminal pathways of aromatic amino acid biosynthesis. This reaction introduces a second double bond into the aromatic ring system. The protein is Chorismate synthase of Paraburkholderia phytofirmans (strain DSM 17436 / LMG 22146 / PsJN) (Burkholderia phytofirmans).